A 377-amino-acid polypeptide reads, in one-letter code: RNA polymerase sigma factor SigA (377 aa).

The segment at 72 to 92 is disordered; it reads EVSNLRQGEDHDGNDNDDFNF. Positions 144-214 are sigma-70 factor domain-2; it reads LAEANLRLVV…TRAIADQART (71 aa). Positions 168–171 match the Interaction with polymerase core subunit RpoC motif; sequence DLIQ. The sigma-70 factor domain-3 stretch occupies residues 223-299; that stretch reads ETINKLIRVS…DQEALTPADA (77 aa). The sigma-70 factor domain-4 stretch occupies residues 312 to 365; that stretch reads VLDTLTEREENVLRLRFGLDDGRTRTLEEVGKVFGVTRERIRQIEAKALRKLRH. Residues 338–357 constitute a DNA-binding region (H-T-H motif); it reads LEEVGKVFGVTRERIRQIEA.

It belongs to the sigma-70 factor family. RpoD/SigA subfamily. Interacts transiently with the RNA polymerase catalytic core.

It is found in the cytoplasm. Sigma factors are initiation factors that promote the attachment of RNA polymerase to specific initiation sites and are then released. This sigma factor is the primary sigma factor during exponential growth. In Bacillus sp, this protein is RNA polymerase sigma factor SigA.